The chain runs to 343 residues: Heat-inducible transcription repressor HrcA (343 aa).

Belongs to the HrcA family.

Functionally, negative regulator of class I heat shock genes (grpE-dnaK-dnaJ and groELS operons). Prevents heat-shock induction of these operons. In Mycolicibacterium gilvum (strain PYR-GCK) (Mycobacterium gilvum (strain PYR-GCK)), this protein is Heat-inducible transcription repressor HrcA.